The chain runs to 233 residues: Uridylate kinase (233 aa).

ATP-binding positions include 8 to 11 (KLSG), G51, and R55. UMP contacts are provided by residues D68 and 129–136 (TSNPFFTT). 3 residues coordinate ATP: T156, Y162, and D165.

It belongs to the UMP kinase family. As to quaternary structure, homohexamer.

The protein localises to the cytoplasm. The enzyme catalyses UMP + ATP = UDP + ADP. It participates in pyrimidine metabolism; CTP biosynthesis via de novo pathway; UDP from UMP (UMPK route): step 1/1. Its activity is regulated as follows. Inhibited by UTP. Functionally, catalyzes the reversible phosphorylation of UMP to UDP. This Thermosipho melanesiensis (strain DSM 12029 / CIP 104789 / BI429) protein is Uridylate kinase.